Consider the following 457-residue polypeptide: tRNA-2-methylthio-N(6)-dimethylallyladenosine synthase (457 aa).

The 118-residue stretch at 3–120 folds into the MTTase N-terminal domain; that stretch reads KKVYVKTFGC…LPQMIDARRE (118 aa). 6 residues coordinate [4Fe-4S] cluster: Cys-12, Cys-49, Cys-83, Cys-157, Cys-161, and Cys-164. One can recognise a Radical SAM core domain in the interval 143–377; that stretch reads RVEGPSAFVS…QATIEENVAR (235 aa). Residues 380-447 enclose the TRAM domain; sequence QSMVGKVERI…PHSLRGELVL (68 aa).

The protein belongs to the methylthiotransferase family. MiaB subfamily. In terms of assembly, monomer. [4Fe-4S] cluster is required as a cofactor.

It is found in the cytoplasm. It catalyses the reaction N(6)-dimethylallyladenosine(37) in tRNA + (sulfur carrier)-SH + AH2 + 2 S-adenosyl-L-methionine = 2-methylsulfanyl-N(6)-dimethylallyladenosine(37) in tRNA + (sulfur carrier)-H + 5'-deoxyadenosine + L-methionine + A + S-adenosyl-L-homocysteine + 2 H(+). Functionally, catalyzes the methylthiolation of N6-(dimethylallyl)adenosine (i(6)A), leading to the formation of 2-methylthio-N6-(dimethylallyl)adenosine (ms(2)i(6)A) at position 37 in tRNAs that read codons beginning with uridine. The chain is tRNA-2-methylthio-N(6)-dimethylallyladenosine synthase from Burkholderia lata (strain ATCC 17760 / DSM 23089 / LMG 22485 / NCIMB 9086 / R18194 / 383).